Reading from the N-terminus, the 403-residue chain is MDKQLNDAPCGFLALSEEGSIIAANRTLIKILDYEPEQVIGQHMNMMLTIPAQLFCQLYFFPLLKLEHHIEEIYISLKARDGEEIPVLINAIARHDSGASVFDCVLIPMRKRNEYENELLIARNEAQEALLAKQKANAELEIALETLKAKQEELLEINKQNQQFKLNTKRELELARKIQKNSLTEPIVNDQVQIDSYYNASSELSGDLYGYYQIDEHRYGIIILDVMGHGISSALITMSLHPLFQRQITQGLSPVKVMKELDRHLHSLFQNDEEARHYCTAIYLEIDIARQRIDYVNAGHPPALWQDDSGTQHLLHATSPPIGMFEDLEFQSSSLSYTEDGRLLLYTDGVMDPTASCYLFDLLKDHPDSPIADLKEKILTSLQHQKEAHHKSDDECFILVDVK.

The PAS domain occupies 1-42; it reads MDKQLNDAPCGFLALSEEGSIIAANRTLIKILDYEPEQVIGQ. A PPM-type phosphatase domain is found at 191–402; it reads QVQIDSYYNA…DDECFILVDV (212 aa).

Mn(2+) serves as cofactor.

The enzyme catalyses O-phospho-L-serine + H2O = L-serine + phosphate. The catalysed reaction is O-phospho-D-serine + H2O = D-serine + phosphate. Positive regulator of sigma-B activity. Dephosphorylates RsbV in response to energy stress. This chain is Phosphoserine phosphatase RsbP (rsbP), found in Bacillus subtilis (strain 168).